The primary structure comprises 710 residues: Fatty acid oxidation complex subunit alpha (710 aa).

Positions 1–190 are enoyl-CoA hydratase; the sequence is MSMEKTFNLA…KMGLVNDVVP (190 aa). Residues 310–710 are 3-hydroxyacyl-CoA dehydrogenase; it reads RKVKKVMVLG…ASDGSQFYKK (401 aa).

It in the N-terminal section; belongs to the enoyl-CoA hydratase/isomerase family. This sequence in the central section; belongs to the 3-hydroxyacyl-CoA dehydrogenase family. As to quaternary structure, heterotetramer of two alpha chains (FadJ) and two beta chains (FadI).

It is found in the cytoplasm. The enzyme catalyses a (3S)-3-hydroxyacyl-CoA = a (2E)-enoyl-CoA + H2O. The catalysed reaction is a 4-saturated-(3S)-3-hydroxyacyl-CoA = a (3E)-enoyl-CoA + H2O. It catalyses the reaction a (3S)-3-hydroxyacyl-CoA + NAD(+) = a 3-oxoacyl-CoA + NADH + H(+). It carries out the reaction (3S)-3-hydroxybutanoyl-CoA = (3R)-3-hydroxybutanoyl-CoA. It participates in lipid metabolism; fatty acid beta-oxidation. In terms of biological role, catalyzes the formation of a hydroxyacyl-CoA by addition of water on enoyl-CoA. Also exhibits 3-hydroxyacyl-CoA epimerase and 3-hydroxyacyl-CoA dehydrogenase activities. In Shewanella frigidimarina (strain NCIMB 400), this protein is Fatty acid oxidation complex subunit alpha.